Here is a 277-residue protein sequence, read N- to C-terminus: Shikimate dehydrogenase (NADP(+)) (277 aa).

Shikimate-binding positions include 15 to 17 (SLS) and T62. K66 acts as the Proton acceptor in catalysis. Shikimate-binding residues include N87 and D102. Residues 127–131 (GAGGA), 151–156 (NRTVDK), and I219 contribute to the NADP(+) site. Y221 provides a ligand contact to shikimate. G242 contacts NADP(+).

Belongs to the shikimate dehydrogenase family. Homodimer.

The enzyme catalyses shikimate + NADP(+) = 3-dehydroshikimate + NADPH + H(+). Its pathway is metabolic intermediate biosynthesis; chorismate biosynthesis; chorismate from D-erythrose 4-phosphate and phosphoenolpyruvate: step 4/7. Its function is as follows. Involved in the biosynthesis of the chorismate, which leads to the biosynthesis of aromatic amino acids. Catalyzes the reversible NADPH linked reduction of 3-dehydroshikimate (DHSA) to yield shikimate (SA). The chain is Shikimate dehydrogenase (NADP(+)) from Bacillus cereus (strain 03BB102).